The primary structure comprises 267 residues: Putative methylsterol monooxygenase DDB_G0270946 (267 aa).

3 consecutive transmembrane segments (helical) span residues 31-51 (FIAH…ADFI), 72-92 (YCAI…MYIF), and 110-130 (IPYL…YFYW). One can recognise a Fatty acid hydroxylase domain in the interval 119-249 (SSFIIEDFYF…FTYLDKIFGT (131 aa)). The short motif at 132 to 136 (HRALH) is the Histidine box-1 element. The Histidine box-2 motif lies at 145-149 (HKVHH). Positions 224–230 (FHDYHHE) match the Histidine box-3 motif.

It belongs to the sterol desaturase family. Requires Fe cation as cofactor.

The protein localises to the endoplasmic reticulum membrane. It carries out the reaction 4,4-dimethyl-5alpha-cholest-7-en-3beta-ol + 6 Fe(II)-[cytochrome b5] + 3 O2 + 5 H(+) = 4alpha-carboxy-4beta-methyl-5alpha-cholest-7-ene-3beta-ol + 6 Fe(III)-[cytochrome b5] + 4 H2O. It participates in steroid biosynthesis; zymosterol biosynthesis; zymosterol from lanosterol: step 3/6. The sequence is that of Putative methylsterol monooxygenase DDB_G0270946 from Dictyostelium discoideum (Social amoeba).